The chain runs to 180 residues: MEQFHATTIFAVQHNGSVAMAGDGQVTFGNSMVMKHGAKKVRRLYRGEVLAGFAGSVADAITLFEKFEGKLEEYHGNLQRAAVELAKEWRMDKILRRLEAMMIVANKEHLLLISGNGEIIEPDDGILAIGSGGSFALAAGRALKTYAPHLGAREIAEASLRTAAEICVFTNNNLVVDELN.

The active site involves Thr7. Positions 164, 167, and 170 each coordinate Na(+).

This sequence belongs to the peptidase T1B family. HslV subfamily. A double ring-shaped homohexamer of HslV is capped on each side by a ring-shaped HslU homohexamer. The assembly of the HslU/HslV complex is dependent on binding of ATP.

The protein resides in the cytoplasm. The enzyme catalyses ATP-dependent cleavage of peptide bonds with broad specificity.. Allosterically activated by HslU binding. Protease subunit of a proteasome-like degradation complex believed to be a general protein degrading machinery. This Brevibacillus brevis (strain 47 / JCM 6285 / NBRC 100599) protein is ATP-dependent protease subunit HslV.